Reading from the N-terminus, the 71-residue chain is DNA-directed RNA polymerase subunit omega (71 aa).

It belongs to the RNA polymerase subunit omega family. As to quaternary structure, the RNAP catalytic core consists of 2 alpha, 1 beta/beta' and 1 omega subunit. When a sigma factor is associated with the core the holoenzyme is formed, which can initiate transcription.

It carries out the reaction RNA(n) + a ribonucleoside 5'-triphosphate = RNA(n+1) + diphosphate. In terms of biological role, promotes RNA polymerase assembly. Latches the N- and C-terminal regions of the beta' subunit thereby facilitating its interaction with the beta and alpha subunits. The chain is DNA-directed RNA polymerase subunit omega from Wolinella succinogenes (strain ATCC 29543 / DSM 1740 / CCUG 13145 / JCM 31913 / LMG 7466 / NCTC 11488 / FDC 602W) (Vibrio succinogenes).